We begin with the raw amino-acid sequence, 352 residues long: Methylthioribose-1-phosphate isomerase (352 aa).

Substrate-binding positions include 49–51, Arg-93, and Gln-202; that span reads RGA. Asp-243 acts as the Proton donor in catalysis. 253 to 254 is a binding site for substrate; the sequence is NK.

Belongs to the eIF-2B alpha/beta/delta subunits family. MtnA subfamily.

It carries out the reaction 5-(methylsulfanyl)-alpha-D-ribose 1-phosphate = 5-(methylsulfanyl)-D-ribulose 1-phosphate. The protein operates within amino-acid biosynthesis; L-methionine biosynthesis via salvage pathway; L-methionine from S-methyl-5-thio-alpha-D-ribose 1-phosphate: step 1/6. In terms of biological role, catalyzes the interconversion of methylthioribose-1-phosphate (MTR-1-P) into methylthioribulose-1-phosphate (MTRu-1-P). The protein is Methylthioribose-1-phosphate isomerase of Magnetococcus marinus (strain ATCC BAA-1437 / JCM 17883 / MC-1).